Here is a 383-residue protein sequence, read N- to C-terminus: Presenilin-associated rhomboid-like protein A, mitochondrial (383 aa).

The N-terminal 37 residues, 1 to 37, are a transit peptide targeting the mitochondrion; the sequence is MAWRSCFMKWTQINSINASSLCPKSTRLNIHPQQRCG. The interval 35 to 75 is disordered; the sequence is RCGFRKTERPSESKKGVQETEAEAGGHNRAVPPKPVPPLPP. The Mitochondrial matrix segment spans residues 38 to 83; that stretch reads FRKTERPSESKKGVQETEAEAGGHNRAVPPKPVPPLPPRRPHQLFR. The span at 39–52 shows a compositional bias: basic and acidic residues; sequence RKTERPSESKKGVQ. Over residues 66–75 the composition is skewed to pro residues; the sequence is PPKPVPPLPP. A helical membrane pass occupies residues 84–104; that stretch reads PLVFTVGFTGCSFGAAAILQY. Residues 105–168 lie on the Mitochondrial intermembrane side of the membrane; the sequence is ESVKSRVQLA…FWSGLSEGQK (64 aa). Residues 169 to 189 form a helical membrane-spanning segment; that stretch reads TVTGIIALNTVVLCCWRVPAM. Residues 190–219 are Mitochondrial matrix-facing; that stretch reads QRFLVKYFTSNPASKTRCLPMVLSSFSHYS. A helical membrane pass occupies residues 220-240; the sequence is VIHMVVNMYVLWTFSSSIVSL. At 241-245 the chain is on the mitochondrial intermembrane side; the sequence is LGREQ. A helical transmembrane segment spans residues 246 to 266; sequence FLALYLSGGVISTFVSYVFKT. At 267–271 the chain is on the mitochondrial matrix side; that stretch reads ATGRL. The helical transmembrane segment at 272 to 292 threads the bilayer; that stretch reads GPSLGASGSIMTVLAAVCTKI. The Nucleophile role is filled by Ser-278. Residues 293 to 298 are Mitochondrial intermembrane-facing; the sequence is PEAKLG. A helical transmembrane segment spans residues 299–319; that stretch reads IVLLPVISFSAGNALKALVAL. The Mitochondrial matrix segment spans residues 320–334; that stretch reads DIAGLVLGWRFFDHA. The helical transmembrane segment at 335–355 threads the bilayer; that stretch reads AHLGGALFGVWYIGYGHELIW. Residue His-336 is part of the active site. At 356–383 the chain is on the mitochondrial intermembrane side; sequence RKREPLIKFWHELRNMSPGRPGPGGGGG.

This sequence belongs to the peptidase S54 family.

It localises to the mitochondrion inner membrane. The catalysed reaction is Cleaves type-1 transmembrane domains using a catalytic dyad composed of serine and histidine that are contributed by different transmembrane domains.. In terms of biological role, required for the control of apoptosis during postnatal growth. Essential for proteolytic processing of an antiapoptotic form of opa1 which prevents the release of mitochondrial cytochrome c in response to intrinsic apoptotic signals. In Danio rerio (Zebrafish), this protein is Presenilin-associated rhomboid-like protein A, mitochondrial (parla).